Here is a 192-residue protein sequence, read N- to C-terminus: Lipid A acyltransferase PagP (192 aa).

The signal sequence occupies residues 1-29; the sequence is MVVNVVIVAKKYFLFITLLIIQVSLPAHA. Residues H64, D107, and S108 contribute to the active site.

The protein belongs to the lipid A palmitoyltransferase family. As to quaternary structure, homodimer.

Its subcellular location is the cell outer membrane. It catalyses the reaction a lipid A + a 1,2-diacyl-sn-glycero-3-phosphocholine = a hepta-acyl lipid A + a 2-acyl-sn-glycero-3-phosphocholine. It carries out the reaction a lipid IVA + a 1,2-diacyl-sn-glycero-3-phosphocholine = a lipid IVB + a 2-acyl-sn-glycero-3-phosphocholine. The catalysed reaction is a lipid IIA + a 1,2-diacyl-sn-glycero-3-phosphocholine = a lipid IIB + a 2-acyl-sn-glycero-3-phosphocholine. Its function is as follows. Transfers a fatty acid residue from the sn-1 position of a phospholipid to the N-linked hydroxyfatty acid chain on the proximal unit of lipid A or its precursors. This chain is Lipid A acyltransferase PagP, found in Citrobacter rodentium (strain ICC168) (Citrobacter freundii biotype 4280).